The sequence spans 229 residues: MAKLTKKMKAIKAGVDSTKAYEINEAIAVLKQFATAKFVESVDVAVNLGIDPRKSDQNVRGATVLPHGTGREVRVAVFTQGANADAAKEAGADLVGMEDLAEQIKKGEMNFDVVIASPDAMRVVGQLGQVLGPRGLMPNPKVGTVTPNVAEAVKNAKSGQIRYRNDKNGIIHTTIGKANFSEVQLKENLQALLVALNKAKPTTAKGIFIKKVSISTTMGAGVAVDQASL.

The protein belongs to the universal ribosomal protein uL1 family. Part of the 50S ribosomal subunit.

Functionally, binds directly to 23S rRNA. The L1 stalk is quite mobile in the ribosome, and is involved in E site tRNA release. Its function is as follows. Protein L1 is also a translational repressor protein, it controls the translation of the L11 operon by binding to its mRNA. The chain is Large ribosomal subunit protein uL1 from Haemophilus influenzae (strain PittEE).